The primary structure comprises 111 residues: Nucleoid-associated protein PputGB1_3833 (111 aa).

2 disordered regions span residues 1–25 and 87–111; these read MMKG…KMQE and EQSS…KMPF.

The protein belongs to the YbaB/EbfC family. As to quaternary structure, homodimer.

The protein localises to the cytoplasm. It localises to the nucleoid. Functionally, binds to DNA and alters its conformation. May be involved in regulation of gene expression, nucleoid organization and DNA protection. The chain is Nucleoid-associated protein PputGB1_3833 from Pseudomonas putida (strain GB-1).